The following is a 306-amino-acid chain: Aspartate carbamoyltransferase catalytic subunit (306 aa).

Positions 55 and 56 each coordinate carbamoyl phosphate. L-aspartate is bound at residue K84. Positions 105, 133, and 136 each coordinate carbamoyl phosphate. R166 and R227 together coordinate L-aspartate. Positions 265 and 266 each coordinate carbamoyl phosphate.

This sequence belongs to the aspartate/ornithine carbamoyltransferase superfamily. ATCase family. As to quaternary structure, heterododecamer (2C3:3R2) of six catalytic PyrB chains organized as two trimers (C3), and six regulatory PyrI chains organized as three dimers (R2).

The enzyme catalyses carbamoyl phosphate + L-aspartate = N-carbamoyl-L-aspartate + phosphate + H(+). It functions in the pathway pyrimidine metabolism; UMP biosynthesis via de novo pathway; (S)-dihydroorotate from bicarbonate: step 2/3. Its function is as follows. Catalyzes the condensation of carbamoyl phosphate and aspartate to form carbamoyl aspartate and inorganic phosphate, the committed step in the de novo pyrimidine nucleotide biosynthesis pathway. The chain is Aspartate carbamoyltransferase catalytic subunit from Neisseria gonorrhoeae (strain NCCP11945).